The following is a 1065-amino-acid chain: DNA-directed RNA polymerase subunit beta (1065 aa).

This sequence belongs to the RNA polymerase beta chain family. In terms of assembly, in plastids the minimal PEP RNA polymerase catalytic core is composed of four subunits: alpha, beta, beta', and beta''. When a (nuclear-encoded) sigma factor is associated with the core the holoenzyme is formed, which can initiate transcription.

Its subcellular location is the plastid. The protein localises to the chloroplast. It catalyses the reaction RNA(n) + a ribonucleoside 5'-triphosphate = RNA(n+1) + diphosphate. Its function is as follows. DNA-dependent RNA polymerase catalyzes the transcription of DNA into RNA using the four ribonucleoside triphosphates as substrates. This chain is DNA-directed RNA polymerase subunit beta, found in Marchantia polymorpha (Common liverwort).